A 552-amino-acid chain; its full sequence is CTP synthase (552 aa).

Positions 1–270 are amidoligase domain; that stretch reads MTKYVFVTGG…DRIICEELKL (270 aa). S13 serves as a coordination point for CTP. Residue S13 participates in UTP binding. Residues 14–19 and D71 contribute to the ATP site; that span reads SLGKGI. D71 and E144 together coordinate Mg(2+). Residues 151-153, 191-196, and K227 each bind CTP; these read DIE and KTKPTQ. Residues 191–196 and K227 contribute to the UTP site; that span reads KTKPTQ. Positions 295 to 547 constitute a Glutamine amidotransferase type-1 domain; it reads TIGMVGKYVD…VEAALANKQA (253 aa). G356 is an L-glutamine binding site. Residue C383 is the Nucleophile; for glutamine hydrolysis of the active site. L-glutamine is bound by residues 384-387, E407, and R473; that span reads LGMQ. Active-site residues include H520 and E522.

This sequence belongs to the CTP synthase family. In terms of assembly, homotetramer.

The catalysed reaction is UTP + L-glutamine + ATP + H2O = CTP + L-glutamate + ADP + phosphate + 2 H(+). The enzyme catalyses L-glutamine + H2O = L-glutamate + NH4(+). It carries out the reaction UTP + NH4(+) + ATP = CTP + ADP + phosphate + 2 H(+). Its pathway is pyrimidine metabolism; CTP biosynthesis via de novo pathway; CTP from UDP: step 2/2. Its activity is regulated as follows. Allosterically activated by GTP, when glutamine is the substrate; GTP has no effect on the reaction when ammonia is the substrate. The allosteric effector GTP functions by stabilizing the protein conformation that binds the tetrahedral intermediate(s) formed during glutamine hydrolysis. Inhibited by the product CTP, via allosteric rather than competitive inhibition. Its function is as follows. Catalyzes the ATP-dependent amination of UTP to CTP with either L-glutamine or ammonia as the source of nitrogen. Regulates intracellular CTP levels through interactions with the four ribonucleotide triphosphates. This Burkholderia cenocepacia (strain HI2424) protein is CTP synthase.